Reading from the N-terminus, the 460-residue chain is uncharacterized protein (460 aa).

Residues 8–66 (PVEKNEFIDVVFEDLTHDGAGVAKVKGYPIFVKNGLPGEEAQIKIIKVKKNFAFGRLMK) form the TRAM domain. Cys79, Cys85, Cys88, and Cys166 together coordinate [4Fe-4S] cluster. Residues Gln290, Tyr319, Glu340, and Asp388 each contribute to the S-adenosyl-L-methionine site. The active-site Nucleophile is the Cys415.

The protein belongs to the class I-like SAM-binding methyltransferase superfamily. RNA M5U methyltransferase family.

This is an uncharacterized protein from Bacillus cereus (strain ATCC 10987 / NRS 248).